A 991-amino-acid chain; its full sequence is MAGPVSLRDLLMGASAWMGSESPGGSPTEGGGSAAGGPEPPWREDEICVVGIFGKTALRLNSEKFSLVNTVCDRQVFPLFRHQDPGDPGPGIRTEAGAVGEAGGAEDPGAAAGGSVRGSGAVAEGNRTEAGSQDYSLLQAYYSQESKVLYLLLTSICDNSQLLRACRALQSGEAGGGLSLPHAEAHEFWKHQEKLQCLSLLYLFSVCHILLLVHPTCSFDITYDRVFRALDGLRQKVLPLLKTAIKDCPVGKDWKLNCRPCPPRLLFLFQLNGALKVEPPRNQDPAHPDKPKKHSPKRRLQHALEDQIYRIFRKSRVLTNQSINCLFTVPANQAFVYIVPGSQEEDPVGMLLDQLRSHCTVKDPESLLVPAPLSGPRRYQVMRQHSRQQLSFHIDSSSSSSSGQLVDFTLREFLWQHVELVLSKKGFDDSVGRNPQPSHFELPTYQKWISAASKLYEVAIDGKEEDLGSPTGELTSKILSSIKVLEGFLDIDTKFSENRCQKALPMAHSAYQSNLPHNYTMTVHKNQLAQALRVYSQHARGPAFHKYAMQLHEDCYKFWSNGHQLCEERSLTDQHCVHKFHSLPKSGEKPEADRNPPVLYHNSRARSTGACNCGRKQAPRDDPFDIKAANYDFYQLLEEKCCGKLDHINFPVFEPSTPDPAPAKNESSPAPPDSDADKLKEKEPQTQGESTSLSLALSLGQSTDSLGTYPADPQAGGDNPEVHGQVEVKTEKRPNFVDRQASTVEYLPGMLHSNCPKGLLPKFSSWSLVKLGPAKSYNFHTGLDQQGFIPGTNYLMPWDIVIRTRAEDEGDLDTNSWPAPNKAIPGKRSAVVMGRGRRRDDIARAFVGFEYEDSRGRRFMCSGPDKVMKVMGSGPKESALKALNSDMPLYILSSSQGRGLKPHYAQLMRLFVVVPDAPLQIILMPQVQPGPPPCPVFYPEKQEITLPPDGLWVLRFPYAYVTERGPCFPPKENVQLMSYKVLRGVLKAVTQ.

Disordered stretches follow at residues 16-41, 82-127, and 279-299; these read AWMGSESPGGSPTEGGGSAAGGPEPP, HQDP…EGNR, and PPRNQDPAHPDKPKKHSPKRR. Residues 95 to 110 show a composition bias toward low complexity; that stretch reads EAGAVGEAGGAEDPGA. S115 bears the Phosphoserine mark. Residues 279-289 show a composition bias toward basic and acidic residues; the sequence is PPRNQDPAHPD. The span at 290–299 shows a compositional bias: basic residues; that stretch reads KPKKHSPKRR. Phosphoserine occurs at positions 469 and 668. The disordered stretch occupies residues 653–722; sequence FEPSTPDPAP…PQAGGDNPEV (70 aa). Over residues 675-684 the composition is skewed to basic and acidic residues; it reads DADKLKEKEP. Residues 685–706 show a composition bias toward polar residues; it reads QTQGESTSLSLALSLGQSTDSL. Phosphoserine is present on residues S742 and S895. The residue at position 898 (R898) is an Omega-N-methylarginine.

The protein belongs to the SMG8 family. In terms of assembly, component of the SMG1C complex composed of SMG1, SMG8 and SMG9; the recruitment of SMG8 to SMG1 N-terminus induces a large conformational change in the SMG1 C-terminal head domain containing the catalytic domain. Forms heterodimers with SMG9; this assembly form may represent a SMG1C intermediate form. Post-translationally, phosphorylated by SMG1.

In terms of biological role, involved in nonsense-mediated decay (NMD) of mRNAs containing premature stop codons. Is recruited by release factors to stalled ribosomes together with SMG1 and SMG9 (forming the SMG1C protein kinase complex) and, in the SMG1C complex, is required to mediate the recruitment of SMG1 to the ribosome:SURF complex and to suppress SMG1 kinase activity until the ribosome:SURF complex locates the exon junction complex (EJC). Acts as a regulator of kinase activity. This Homo sapiens (Human) protein is Nonsense-mediated mRNA decay factor SMG8 (SMG8).